A 693-amino-acid chain; its full sequence is Bacterial dynamin-like protein (693 aa).

Residues 1–521 (MVNQVATDRF…DNSPGWAKWA (521 aa)) are Cytoplasmic-facing. The region spanning 66–313 (QQGVFRLLVL…QADLDGTGFP (248 aa)) is the Dynamin-type G domain. The G1 motif stretch occupies residues 76–83 (GDMKRGKS). 79-84 (KRGKST) serves as a coordination point for GTP. The segment at 102–103 (CT) is G2 motif. A G3 motif region spans residues 180-183 (DSPG). A GTP-binding site is contributed by 235–241 (FLVNAWD). The G4 motif stretch occupies residues 238–241 (NAWD). Residue Asn268 is a region of interest, G5 motif. 292-293 (SI) contacts GTP. Positions 311–571 (GFPKFMDSLN…TAVTGILLGP (261 aa)) are middle domain. Residues 347–378 (REAVARRIPLLEQDVNELKKRIDSVEPEFNKL) are a coiled coil. The stretch at 522-574 (MGLLSLSKGNLAGFALAGAGFDWKNILLNYFTVIGIGGIITAVTGILLGPIGF) is an intramembrane region. A paddle domain region spans residues 572–606 (IGFALLGLGVGFLQADQARRELVKTAKKELVKHLP). Residues 575-693 (ALLGLGVGFL…AYSNLLAYYS (119 aa)) are Cytoplasmic-facing. The tract at residues 607 to 693 (QVAHEQSQVV…AYSNLLAYYS (87 aa)) is GED. A coiled-coil region spans residues 661-688 (ESEFNRLKNLQEDVIAQLQKIEAAYSNL).

The protein belongs to the TRAFAC class dynamin-like GTPase superfamily. Dynamin/Fzo/YdjA family. Mitofusin subfamily. As to quaternary structure, homodimer. Self-assembles in the presence of GMP-PNP and liposomes, and probably also in the presence of GTP.

It localises to the cell inner membrane. The catalysed reaction is GTP + H2O = GDP + phosphate + H(+). Dynamin-related GTPase probably involved in membrane remodeling. Lipid and nucleotide-binding are thought to induce a large intramolecular rearrangement, leading to assembly on lipid bilayers and possible membrane curving. In the presence of the non-hydrolyzable GTP analog GMP-PNP self-assembles on a lipid bilayer; this does not stimulate subsequent GTPase activity. Does not bind lipids in the presence of GDP; perhaps GTP hydrolysis disrupts membrane-binding. This chain is Bacterial dynamin-like protein, found in Nostoc punctiforme (strain ATCC 29133 / PCC 73102).